Reading from the N-terminus, the 153-residue chain is Ubiquitin-conjugating enzyme E2 36 (153 aa).

Positions 5-151 (NLPRRIIKET…AKEWTRLYAS (147 aa)) constitute a UBC core domain. C89 acts as the Glycyl thioester intermediate in catalysis.

It belongs to the ubiquitin-conjugating enzyme family. As to quaternary structure, interacts with yeast and human Mms2, with the RING domain of RGLG2 and with UEV1A, UEV1B, UEV1C and UEV1D. Ubiquitously expressed at low level.

It catalyses the reaction S-ubiquitinyl-[E1 ubiquitin-activating enzyme]-L-cysteine + [E2 ubiquitin-conjugating enzyme]-L-cysteine = [E1 ubiquitin-activating enzyme]-L-cysteine + S-ubiquitinyl-[E2 ubiquitin-conjugating enzyme]-L-cysteine.. It participates in protein modification; protein ubiquitination. Functionally, catalyzes the synthesis of non-canonical poly-ubiquitin chains that are linked through 'Lys-63'. This type of poly-ubiquitination does not lead to protein degradation by the proteasome. Mediates transcriptional activation of target genes. Required for postreplication repair of UV-damaged DNA and for adapting root developmental programs to suboptimal availability of iron. The protein is Ubiquitin-conjugating enzyme E2 36 (UBC36) of Arabidopsis thaliana (Mouse-ear cress).